Reading from the N-terminus, the 655-residue chain is Potassium voltage-gated channel subfamily A member 4 (655 aa).

Topologically, residues 1–306 (MEVAMVSAES…LLFEYPESSS (306 aa)) are cytoplasmic. The disordered stretch occupies residues 24-153 (QARARERERL…SEEDHGDGCS (130 aa)). The span at 36 to 50 (SRAAAAAAVAAATAA) shows a compositional bias: low complexity. The span at 81 to 90 (GSREEEATRT) shows a compositional bias: basic and acidic residues. Over residues 91–100 (EKKKKLHHRQ) the composition is skewed to basic residues. Ser-123 carries the post-translational modification Phosphoserine. Over residues 123–138 (SEEEEDEEEEEEEEEE) the composition is skewed to acidic residues. The segment covering 139–150 (GRFYYSEEDHGD) has biased composition (basic and acidic residues). The helical transmembrane segment at 307 to 328 (PARGIAIVSVLVILISIVIFCL) threads the bilayer. At 329–372 (ETLPEFRDDRDLIMALSAGGHSRLLNDTSAPHLENSGHTIFNDP) the chain is on the extracellular side. Asn-354 carries N-linked (GlcNAc...) asparagine glycosylation. A helical transmembrane segment spans residues 373–394 (FFIVETVCIVWFSFEFVVRCFA). At 395 to 405 (CPSQALFFKNI) the chain is on the cytoplasmic side. Residues 406–426 (MNIIDIVSILPYFITLGTDLA) form a helical membrane-spanning segment. Topologically, residues 427–441 (QQQGGGNGQQQQAMS) are extracellular. The helical; Voltage-sensor transmembrane segment at 442 to 462 (FAILRIIRLVRVFRIFKLSRH) threads the bilayer. Residues 463 to 477 (SKGLQILGHTLRASM) lie on the Cytoplasmic side of the membrane. Residues 464 to 477 (KGLQILGHTLRASM) form an S4-S5 linker region. A helical membrane pass occupies residues 478–499 (RELGLLIFFLFIGVILFSSAVY). Over 500–513 (FAEADEPTTHFQSI) the chain is Extracellular. Residues 514–525 (PDAFWWAVVTMT) constitute an intramembrane region (helical). Positions 526-531 (TVGYGD) match the Selectivity filter motif. An intramembrane segment occupies 526–533 (TVGYGDMK). Residues 534 to 540 (PITVGGK) lie on the Extracellular side of the membrane. A helical transmembrane segment spans residues 541-569 (IVGSLCAIAGVLTIALPVPVIVSNFNYFY). Residues 570-655 (HRETENEEQT…SNAKAVETDV (86 aa)) are Cytoplasmic-facing. Residue Ser-601 is modified to Phosphoserine; by PKA. Basic and acidic residues predominate over residues 631–642 (CQGKGDDSETDK). The tract at residues 631 to 655 (CQGKGDDSETDKNNCSNAKAVETDV) is disordered. Residues 653-655 (TDV) carry the PDZ-binding motif.

It belongs to the potassium channel family. A (Shaker) (TC 1.A.1.2) subfamily. Kv1.4/KCNA4 sub-subfamily. In terms of assembly, homotetramer and heterotetramer of potassium channel proteins. Interacts with KCNAB1 and KCNAB2. Interacts with DLG1, DLG2 and DLG4 via their PDZ domains. Interacts with SIGMAR1. Part of a complex containing KCNA1, KCNAB1 and LGI1. Detected in a complex with KCNA1. Interacts with KCNA2. Interacts (via cytoplasmic N-terminal domain) with KCNRG. In terms of processing, N-glycosylated. As to expression, detected in brain (at protein level). Heart and brain.

The protein localises to the cell membrane. The protein resides in the cell projection. It localises to the axon. The enzyme catalyses K(+)(in) = K(+)(out). In terms of biological role, voltage-gated potassium channel that mediates transmembrane potassium transport in excitable membranes. Forms tetrameric potassium-selective channels through which potassium ions pass in accordance with their electrochemical gradient. The channel alternates between opened and closed conformations in response to the voltage difference across the membrane. Can form functional homotetrameric channels and heterotetrameric channels that contain variable proportions of KCNA1, KCNA2, KCNA4, KCNA5, and possibly other family members as well; channel properties depend on the type of alpha subunits that are part of the channel. Channel properties are modulated by cytoplasmic beta subunits that regulate the subcellular location of the alpha subunits and promote rapid inactivation. In vivo, membranes probably contain a mixture of heteromeric potassium channel complexes, making it difficult to assign currents observed in intact tissues to any particular potassium channel family member. Homotetrameric KCNA4 forms a potassium channel that opens in response to membrane depolarization, followed by rapid spontaneous channel closure. Likewise, a heterotetrameric channel formed by KCNA1 and KCNA4 shows rapid inactivation. The sequence is that of Potassium voltage-gated channel subfamily A member 4 (Kcna4) from Rattus norvegicus (Rat).